The primary structure comprises 197 residues: Thymidylate kinase (197 aa).

7–14 (GIDGSGKS) contacts ATP.

Belongs to the thymidylate kinase family.

It carries out the reaction dTMP + ATP = dTDP + ADP. Its function is as follows. Phosphorylation of dTMP to form dTDP in both de novo and salvage pathways of dTTP synthesis. The chain is Thymidylate kinase (tmk) from Thermotoga maritima (strain ATCC 43589 / DSM 3109 / JCM 10099 / NBRC 100826 / MSB8).